The following is a 32-amino-acid chain: Photosystem II reaction center protein T (32 aa).

Residues 3-23 (ALVYTFLLVATLGIIFFAIFF) traverse the membrane as a helical segment.

This sequence belongs to the PsbT family. As to quaternary structure, PSII is composed of 1 copy each of membrane proteins PsbA, PsbB, PsbC, PsbD, PsbE, PsbF, PsbH, PsbI, PsbJ, PsbK, PsbL, PsbM, PsbT, PsbY, PsbZ, Psb30/Ycf12, at least 3 peripheral proteins of the oxygen-evolving complex and a large number of cofactors. It forms dimeric complexes.

Its subcellular location is the plastid. The protein resides in the chloroplast thylakoid membrane. In terms of biological role, found at the monomer-monomer interface of the photosystem II (PS II) dimer, plays a role in assembly and dimerization of PSII. PSII is a light-driven water plastoquinone oxidoreductase, using light energy to abstract electrons from H(2)O, generating a proton gradient subsequently used for ATP formation. This Psilotum nudum (Whisk fern) protein is Photosystem II reaction center protein T.